The primary structure comprises 247 residues: Cytochrome c oxidase subunit 2 (247 aa).

Over M1 to N38 the chain is Mitochondrial intermembrane. A helical transmembrane segment spans residues V39–Y55. Residues N56–A86 lie on the Mitochondrial matrix side of the membrane. The helical transmembrane segment at M87–C103 threads the bilayer. Topologically, residues D104–Q247 are mitochondrial intermembrane. Positions 182, 217, 219, 221, 225, and 228 each coordinate Cu cation. E219 serves as a coordination point for Mg(2+).

The protein belongs to the cytochrome c oxidase subunit 2 family. Component of the cytochrome c oxidase (complex IV, CIV), a multisubunit enzyme composed of a catalytic core of 3 subunits and several supernumerary subunits. The complex exists as a monomer or a dimer and forms supercomplexes (SCs) in the inner mitochondrial membrane with ubiquinol-cytochrome c oxidoreductase (cytochrome b-c1 complex, complex III, CIII). Cu cation serves as cofactor.

It localises to the mitochondrion inner membrane. The enzyme catalyses 4 Fe(II)-[cytochrome c] + O2 + 8 H(+)(in) = 4 Fe(III)-[cytochrome c] + 2 H2O + 4 H(+)(out). In terms of biological role, component of the cytochrome c oxidase, the last enzyme in the mitochondrial electron transport chain which drives oxidative phosphorylation. The respiratory chain contains 3 multisubunit complexes succinate dehydrogenase (complex II, CII), ubiquinol-cytochrome c oxidoreductase (cytochrome b-c1 complex, complex III, CIII) and cytochrome c oxidase (complex IV, CIV), that cooperate to transfer electrons derived from NADH and succinate to molecular oxygen, creating an electrochemical gradient over the inner membrane that drives transmembrane transport and the ATP synthase. Cytochrome c oxidase is the component of the respiratory chain that catalyzes the reduction of oxygen to water. Electrons originating from reduced cytochrome c in the intermembrane space (IMS) are transferred via the dinuclear copper A center (CU(A)) of subunit 2 and heme A of subunit 1 to the active site in subunit 1, a binuclear center (BNC) formed by heme A3 and copper B (CU(B)). The BNC reduces molecular oxygen to 2 water molecules using 4 electrons from cytochrome c in the IMS and 4 protons from the mitochondrial matrix. In Eeniella nana (Yeast), this protein is Cytochrome c oxidase subunit 2 (COX2).